A 481-amino-acid chain; its full sequence is tRNA:m(4)X modification enzyme TRM13 homolog (481 aa).

Residues 56–83 (RILCPLDPKHTVYEDQLAKHLKKCNSRE) form a CHHC U11-48K-type zinc finger. Zn(2+) is bound by residues Cys-59, His-65, His-75, and Cys-79. Residues 113–140 (SLSEEQLENLIKKLRKASEGLNSTHEDH) are a coiled coil. Disordered regions lie at residues 296 to 319 (AKRI…SEKD) and 379 to 414 (LEGS…TDSL). The segment covering 385 to 407 (TPERKDAQRDENEEHDDGGDRLT) has biased composition (basic and acidic residues).

The protein belongs to the methyltransferase TRM13 family.

The enzyme catalyses cytidine(4) in tRNA(Pro) + S-adenosyl-L-methionine = 2'-O-methylcytidine(4) in tRNA(Pro) + S-adenosyl-L-homocysteine + H(+). The catalysed reaction is cytidine(4) in tRNA(Gly)(GCC) + S-adenosyl-L-methionine = 2'-O-methylcytidine(4) in tRNA(Gly)(GCC) + S-adenosyl-L-homocysteine + H(+). It carries out the reaction adenosine(4) in tRNA(His) + S-adenosyl-L-methionine = 2'-O-methyladenosine(4) in tRNA(His) + S-adenosyl-L-homocysteine + H(+). Functionally, tRNA methylase which 2'-O-methylates cytidine(4) in tRNA(Pro) and tRNA(Gly)(GCC), and adenosine(4) in tRNA(His). The polypeptide is tRNA:m(4)X modification enzyme TRM13 homolog (Trmt13) (Mus musculus (Mouse)).